The following is a 453-amino-acid chain: Pup--protein ligase (453 aa).

A Mg(2+)-binding site is contributed by Glu-9. ATP is bound at residue Arg-53. Tyr-55 lines the Mg(2+) pocket. Asp-57 serves as the catalytic Proton acceptor. Residue Glu-63 coordinates Mg(2+). Residues Thr-66 and Trp-420 each contribute to the ATP site.

This sequence belongs to the Pup ligase/Pup deamidase family. Pup-conjugating enzyme subfamily.

The catalysed reaction is ATP + [prokaryotic ubiquitin-like protein]-L-glutamate + [protein]-L-lysine = ADP + phosphate + N(6)-([prokaryotic ubiquitin-like protein]-gamma-L-glutamyl)-[protein]-L-lysine.. It functions in the pathway protein degradation; proteasomal Pup-dependent pathway. The protein operates within protein modification; protein pupylation. In terms of biological role, catalyzes the covalent attachment of the prokaryotic ubiquitin-like protein modifier Pup to the proteasomal substrate proteins, thereby targeting them for proteasomal degradation. This tagging system is termed pupylation. The ligation reaction involves the side-chain carboxylate of the C-terminal glutamate of Pup and the side-chain amino group of a substrate lysine. The sequence is that of Pup--protein ligase from Streptomyces scabiei (strain 87.22).